The chain runs to 137 residues: MKINRPLSPHLTIYKPQLTSTFSIFHRISGAFLATMVLFSILFFKIGDLSLTFYHFYQYFFFLTFYLNWFIISLVNFTLLALCYHMSNGVRHLLWDLGFFLELSKVYTSGIIMLFCAAFLALLNIIRQHWSNGQIPY.

The next 2 helical transmembrane spans lie at 31–51 (AFLA…DLSL) and 60–80 (FFFL…FTLL). His85 provides a ligand contact to heme. The helical transmembrane segment at 106-126 (VYTSGIIMLFCAAFLALLNII) threads the bilayer.

This sequence belongs to the cytochrome b560 family. Forms part of complex II containing four subunits: a 70 kDa flavoprotein (FP), a 27 kDa iron-sulfur protein (IP), a cytochrome B and a membrane-anchoring protein. It depends on heme as a cofactor.

It is found in the mitochondrion inner membrane. The protein operates within carbohydrate metabolism; tricarboxylic acid cycle. Membrane-anchoring subunit of succinate dehydrogenase (SDH) that is involved in complex II of the mitochondrial electron transport chain and is responsible for transferring electrons from succinate to ubiquinone (coenzyme Q). In Marchantia polymorpha (Common liverwort), this protein is Succinate dehydrogenase cytochrome b560 subunit (SDH3).